The following is a 119-amino-acid chain: Lamprin 1.8-10 (119 aa).

Residues Met1–Ala19 form the signal peptide. Repeat copies occupy residues Gly41 to Tyr45, Gly46 to Tyr50, Gly51 to Tyr55, Gly56 to Val60, Ala61 to Tyr65, Gly66 to Tyr70, and Gly86 to Tyr90. Residues Gly41–Tyr90 form a 7 X 5 AA approximate repeats region.

In terms of assembly, the polymeric lamprin chains self-aggregate to form fibers and have secondary structures particularly rich in beta-sheets and in beta-turns.

Its subcellular location is the secreted. The protein localises to the extracellular space. It localises to the extracellular matrix. In terms of biological role, self-aggregating protein that is part of the soluble form of lamprin. In Petromyzon marinus (Sea lamprey), this protein is Lamprin 1.8-10.